The following is a 366-amino-acid chain: Endophilin-A (366 aa).

Residues 18-248 form the BAR domain; it reads TEKMGGAEGT…LQEKRSEAES (231 aa). A coiled-coil region spans residues 227–247; sequence QCADVLRGLQETLQEKRSEAE. A disordered region spans residues 266–295; sequence GGGGGLNEDGTPSHISSSASPLPSPMRSPA. The segment covering 277–294 has biased composition (low complexity); that stretch reads PSHISSSASPLPSPMRSP. The SH3 domain maps to 305–364; the sequence is QQQPCCQALYDFDPENPGELGFKENDIITLLNRVDDNWYEGSVNGRTGYFPQSYVQVQVP.

Belongs to the endophilin family.

It localises to the cytoplasm. Its subcellular location is the membrane. Functionally, required presynaptically at the neuromuscular junction. Implicated in synaptic vesicle endocytosis. The polypeptide is Endophilin-A (Drosophila willistoni (Fruit fly)).